The primary structure comprises 115 residues: Phosphoribosyl-AMP cyclohydrolase (115 aa).

Aspartate 80 is a Mg(2+) binding site. Cysteine 81 contacts Zn(2+). Mg(2+)-binding residues include aspartate 82 and aspartate 84. Zn(2+) contacts are provided by cysteine 97 and cysteine 104.

This sequence belongs to the PRA-CH family. In terms of assembly, homodimer. Requires Mg(2+) as cofactor. The cofactor is Zn(2+).

The protein localises to the cytoplasm. It catalyses the reaction 1-(5-phospho-beta-D-ribosyl)-5'-AMP + H2O = 1-(5-phospho-beta-D-ribosyl)-5-[(5-phospho-beta-D-ribosylamino)methylideneamino]imidazole-4-carboxamide. It participates in amino-acid biosynthesis; L-histidine biosynthesis; L-histidine from 5-phospho-alpha-D-ribose 1-diphosphate: step 3/9. Its function is as follows. Catalyzes the hydrolysis of the adenine ring of phosphoribosyl-AMP. This Mycobacterium avium (strain 104) protein is Phosphoribosyl-AMP cyclohydrolase.